The primary structure comprises 618 residues: Dihydroxy-acid dehydratase (618 aa).

Aspartate 81 is a binding site for Mg(2+). Cysteine 122 contacts [2Fe-2S] cluster. Mg(2+)-binding residues include aspartate 123 and lysine 124. An N6-carboxylysine modification is found at lysine 124. [2Fe-2S] cluster is bound at residue cysteine 195. Position 492 (glutamate 492) interacts with Mg(2+). The active-site Proton acceptor is serine 518.

This sequence belongs to the IlvD/Edd family. As to quaternary structure, homodimer. The cofactor is [2Fe-2S] cluster. Requires Mg(2+) as cofactor.

The catalysed reaction is (2R)-2,3-dihydroxy-3-methylbutanoate = 3-methyl-2-oxobutanoate + H2O. It catalyses the reaction (2R,3R)-2,3-dihydroxy-3-methylpentanoate = (S)-3-methyl-2-oxopentanoate + H2O. It functions in the pathway amino-acid biosynthesis; L-isoleucine biosynthesis; L-isoleucine from 2-oxobutanoate: step 3/4. Its pathway is amino-acid biosynthesis; L-valine biosynthesis; L-valine from pyruvate: step 3/4. Its function is as follows. Functions in the biosynthesis of branched-chain amino acids. Catalyzes the dehydration of (2R,3R)-2,3-dihydroxy-3-methylpentanoate (2,3-dihydroxy-3-methylvalerate) into 2-oxo-3-methylpentanoate (2-oxo-3-methylvalerate) and of (2R)-2,3-dihydroxy-3-methylbutanoate (2,3-dihydroxyisovalerate) into 2-oxo-3-methylbutanoate (2-oxoisovalerate), the penultimate precursor to L-isoleucine and L-valine, respectively. This Zymomonas mobilis subsp. mobilis (strain ATCC 31821 / ZM4 / CP4) protein is Dihydroxy-acid dehydratase.